A 459-amino-acid polypeptide reads, in one-letter code: uncharacterized protein (459 aa).

Residues 5–63 (PVEEGQKFPLTIRRMGINGEGIGYFKKAVVFVPGAITGEEVVVEAVKVRDRFTEAKLNK) enclose the TRAM domain. Residues Cys76, Cys82, Cys85, and Cys166 each contribute to the [4Fe-4S] cluster site. 4 residues coordinate S-adenosyl-L-methionine: Gln290, Tyr319, Asp340, and Asp388. Catalysis depends on Cys415, which acts as the Nucleophile.

The protein belongs to the class I-like SAM-binding methyltransferase superfamily. RNA M5U methyltransferase family.

This is an uncharacterized protein from Listeria monocytogenes serovar 1/2a (strain ATCC BAA-679 / EGD-e).